Here is a 207-residue protein sequence, read N- to C-terminus: Peptidyl-tRNA hydrolase (207 aa).

Y19 is a binding site for tRNA. H24 (proton acceptor) is an active-site residue. Positions 70, 72, and 118 each coordinate tRNA.

It belongs to the PTH family. In terms of assembly, monomer.

Its subcellular location is the cytoplasm. The catalysed reaction is an N-acyl-L-alpha-aminoacyl-tRNA + H2O = an N-acyl-L-amino acid + a tRNA + H(+). Its function is as follows. Hydrolyzes ribosome-free peptidyl-tRNAs (with 1 or more amino acids incorporated), which drop off the ribosome during protein synthesis, or as a result of ribosome stalling. Catalyzes the release of premature peptidyl moieties from peptidyl-tRNA molecules trapped in stalled 50S ribosomal subunits, and thus maintains levels of free tRNAs and 50S ribosomes. This chain is Peptidyl-tRNA hydrolase, found in Synechococcus sp. (strain CC9311).